The sequence spans 167 residues: Putative peroxiredoxin-A (167 aa).

Positions 4–167 constitute a Thioredoxin domain; it reads IKRGDRFPTT…STAQKIIAKL (164 aa). The active-site Cysteine sulfenic acid (-SOH) intermediate is C53. A Microbody targeting signal motif is present at residues 165–167; that stretch reads AKL.

This sequence belongs to the peroxiredoxin family. Prx5 subfamily.

It is found in the peroxisome membrane. It carries out the reaction a hydroperoxide + [thioredoxin]-dithiol = an alcohol + [thioredoxin]-disulfide + H2O. Thiol-specific peroxidase that catalyzes the reduction of hydrogen peroxide and organic hydroperoxides to water and alcohols, respectively. Plays a role in cell protection against oxidative stress by detoxifying peroxides and as sensor of hydrogen peroxide-mediated signaling events. The polypeptide is Putative peroxiredoxin-A (PMPA) (Candida boidinii (Yeast)).